We begin with the raw amino-acid sequence, 945 residues long: Valine--tRNA ligase (945 aa).

Residues 42–52 (PNVTGTLHMGH) carry the 'HIGH' region motif. A 'KMSKS' region motif is present at residues 552–556 (KMSKS). K555 serves as a coordination point for ATP. Positions 879 to 945 (DKAAETARLS…VQNQLAKLKD (67 aa)) form a coiled coil.

This sequence belongs to the class-I aminoacyl-tRNA synthetase family. ValS type 1 subfamily. Monomer.

Its subcellular location is the cytoplasm. It carries out the reaction tRNA(Val) + L-valine + ATP = L-valyl-tRNA(Val) + AMP + diphosphate. Catalyzes the attachment of valine to tRNA(Val). As ValRS can inadvertently accommodate and process structurally similar amino acids such as threonine, to avoid such errors, it has a 'posttransfer' editing activity that hydrolyzes mischarged Thr-tRNA(Val) in a tRNA-dependent manner. The sequence is that of Valine--tRNA ligase from Neisseria meningitidis serogroup B (strain ATCC BAA-335 / MC58).